The chain runs to 164 residues: Anterior gradient protein 3 (164 aa).

The first 19 residues, 1-19 (MYFPMIELTLVLLASSNLA), serve as a signal peptide directing secretion. A Prevents secretion from ER motif is present at residues 161-164 (QTEL).

Belongs to the AGR family.

It is found in the endoplasmic reticulum. Its subcellular location is the cytoplasm. Its function is as follows. Required for calcium-mediated regulation of ciliary beat frequency in the airway. This is Anterior gradient protein 3 from Xenopus tropicalis (Western clawed frog).